The chain runs to 450 residues: Glucose-6-phosphate isomerase (450 aa).

At T38 the chain carries Phosphothreonine. E290 acts as the Proton donor in catalysis. Residues H311 and K425 contribute to the active site.

Belongs to the GPI family.

It is found in the cytoplasm. The enzyme catalyses alpha-D-glucose 6-phosphate = beta-D-fructose 6-phosphate. It participates in carbohydrate biosynthesis; gluconeogenesis. The protein operates within carbohydrate degradation; glycolysis; D-glyceraldehyde 3-phosphate and glycerone phosphate from D-glucose: step 2/4. Its function is as follows. Catalyzes the reversible isomerization of glucose-6-phosphate to fructose-6-phosphate. The protein is Glucose-6-phosphate isomerase of Bacillus subtilis (strain 168).